The primary structure comprises 368 residues: Probable dual-specificity RNA methyltransferase RlmN (368 aa).

E100 serves as the catalytic Proton acceptor. A Radical SAM core domain is found at 106 to 344 (QYYGLSVCVT…CVVRQEHGTD (239 aa)). C113 and C349 are joined by a disulfide. Residues C120, C124, and C127 each coordinate [4Fe-4S] cluster. Residues 172 to 173 (GE), S204, 227 to 229 (SLH), and N305 contribute to the S-adenosyl-L-methionine site. Residue C349 is the S-methylcysteine intermediate of the active site.

The protein belongs to the radical SAM superfamily. RlmN family. It depends on [4Fe-4S] cluster as a cofactor.

The protein localises to the cytoplasm. It carries out the reaction adenosine(2503) in 23S rRNA + 2 reduced [2Fe-2S]-[ferredoxin] + 2 S-adenosyl-L-methionine = 2-methyladenosine(2503) in 23S rRNA + 5'-deoxyadenosine + L-methionine + 2 oxidized [2Fe-2S]-[ferredoxin] + S-adenosyl-L-homocysteine. The enzyme catalyses adenosine(37) in tRNA + 2 reduced [2Fe-2S]-[ferredoxin] + 2 S-adenosyl-L-methionine = 2-methyladenosine(37) in tRNA + 5'-deoxyadenosine + L-methionine + 2 oxidized [2Fe-2S]-[ferredoxin] + S-adenosyl-L-homocysteine. Specifically methylates position 2 of adenine 2503 in 23S rRNA and position 2 of adenine 37 in tRNAs. This Streptococcus agalactiae serotype III (strain NEM316) protein is Probable dual-specificity RNA methyltransferase RlmN.